Reading from the N-terminus, the 146-residue chain is Protein U1 (146 aa).

This sequence belongs to the nanovirus U1 protein family.

In Subterranean clover stunt virus (strain F) (SCSV), this protein is Protein U1 (DNA-U1).